Here is a 908-residue protein sequence, read N- to C-terminus: DNA mismatch repair protein MutS (908 aa).

662–669 serves as a coordination point for ATP; that stretch reads GPNMGGKS.

Belongs to the DNA mismatch repair MutS family.

Functionally, this protein is involved in the repair of mismatches in DNA. It is possible that it carries out the mismatch recognition step. This protein has a weak ATPase activity. The protein is DNA mismatch repair protein MutS of Rhizobium johnstonii (strain DSM 114642 / LMG 32736 / 3841) (Rhizobium leguminosarum bv. viciae).